The following is a 75-amino-acid chain: Rugosin-LK2 (75 aa).

Positions methionine 1–glycine 24 are cleaved as a signal peptide. The propeptide occupies glutamate 25–glutamate 40.

Expressed by the skin glands.

It is found in the secreted. Has antimicrobial activity against Gram-positive bacteria S.aureus ATCC 2592 (MIC=10.0 uM), S.aureus ATCC 43300 (MIC=10.0 uM) and B.subtilis (MIC=30.0 uM), against Gram-negative bacteria E.coli ML-35P (MIC=10.0 uM), P.aeruginosa PA01 (MIC=2.5 uM) and P.aeruginosa ATCC 27853 (MIC=2.5 uM) and against fungus C.albicans ATCC 2002 (MIC=10.0 uM). The polypeptide is Rugosin-LK2 (Limnonectes kuhlii (Kuhl's Creek frog)).